Here is a 453-residue protein sequence, read N- to C-terminus: Chromosomal replication initiator protein DnaA (453 aa).

The tract at residues Met-1 to Gln-79 is domain I, interacts with DnaA modulators. The segment at Gln-79–Ser-111 is domain II. The interval Tyr-112 to Ser-330 is domain III, AAA+ region. 4 residues coordinate ATP: Gly-156, Gly-158, Lys-159, and Thr-160. Positions Arg-331 to Pro-453 are domain IV, binds dsDNA.

The protein belongs to the DnaA family. In terms of assembly, oligomerizes as a right-handed, spiral filament on DNA at oriC.

It localises to the cytoplasm. Plays an essential role in the initiation and regulation of chromosomal replication. ATP-DnaA binds to the origin of replication (oriC) to initiate formation of the DNA replication initiation complex once per cell cycle. Binds the DnaA box (a 9 base pair repeat at the origin) and separates the double-stranded (ds)DNA. Forms a right-handed helical filament on oriC DNA; dsDNA binds to the exterior of the filament while single-stranded (ss)DNA is stabiized in the filament's interior. The ATP-DnaA-oriC complex binds and stabilizes one strand of the AT-rich DNA unwinding element (DUE), permitting loading of DNA polymerase. After initiation quickly degrades to an ADP-DnaA complex that is not apt for DNA replication. Binds acidic phospholipids. In Lachnoclostridium phytofermentans (strain ATCC 700394 / DSM 18823 / ISDg) (Clostridium phytofermentans), this protein is Chromosomal replication initiator protein DnaA.